The following is an 85-amino-acid chain: uncharacterized protein (85 aa).

To A.fulgidus AF_0255 and AF_1363.

This is an uncharacterized protein from Archaeoglobus fulgidus (strain ATCC 49558 / DSM 4304 / JCM 9628 / NBRC 100126 / VC-16).